The primary structure comprises 333 residues: Beta-ketoacyl-[acyl-carrier-protein] synthase III (333 aa).

Catalysis depends on residues cysteine 117 and histidine 257. Positions 258–262 (QANLR) are ACP-binding. Asparagine 287 is a catalytic residue.

Belongs to the thiolase-like superfamily. FabH family. In terms of assembly, homodimer.

It localises to the cytoplasm. It catalyses the reaction malonyl-[ACP] + acetyl-CoA + H(+) = 3-oxobutanoyl-[ACP] + CO2 + CoA. Its pathway is lipid metabolism; fatty acid biosynthesis. In terms of biological role, catalyzes the condensation reaction of fatty acid synthesis by the addition to an acyl acceptor of two carbons from malonyl-ACP. Catalyzes the first condensation reaction which initiates fatty acid synthesis and may therefore play a role in governing the total rate of fatty acid production. Possesses both acetoacetyl-ACP synthase and acetyl transacylase activities. Its substrate specificity determines the biosynthesis of branched-chain and/or straight-chain of fatty acids. This is Beta-ketoacyl-[acyl-carrier-protein] synthase III from Azobacteroides pseudotrichonymphae genomovar. CFP2.